Here is a 189-residue protein sequence, read N- to C-terminus: Hypoxanthine/guanine phosphoribosyltransferase (189 aa).

This sequence belongs to the purine/pyrimidine phosphoribosyltransferase family. Archaeal HPRT subfamily. As to quaternary structure, homodimer.

It is found in the cytoplasm. It catalyses the reaction IMP + diphosphate = hypoxanthine + 5-phospho-alpha-D-ribose 1-diphosphate. The enzyme catalyses GMP + diphosphate = guanine + 5-phospho-alpha-D-ribose 1-diphosphate. Its pathway is purine metabolism; IMP biosynthesis via salvage pathway; IMP from hypoxanthine: step 1/1. In terms of biological role, catalyzes a salvage reaction resulting in the formation of IMP that is energically less costly than de novo synthesis. In Methanosarcina acetivorans (strain ATCC 35395 / DSM 2834 / JCM 12185 / C2A), this protein is Hypoxanthine/guanine phosphoribosyltransferase (hpt).